The primary structure comprises 319 residues: Transcription factor VBP (319 aa).

Composition is skewed to low complexity over residues 1–31 (MPGRAAHQEAAAAGGAAAEPTAAGGSAGAVA) and 143–158 (ASASTGSPVSSSSTAV). Disordered stretches follow at residues 1-35 (MPGRAAHQEAAAAGGAAAEPTAAGGSAGAVAQQPE) and 139-186 (EKEP…DPDC). Positions 159–180 (YQQSEAASSTESPPQNERNTPS) are enriched in polar residues. Residues 243–306 (DEKYWTRRKK…GRCKNIVSKY (64 aa)) form the bZIP domain. The interval 245 to 265 (KYWTRRKKNNVAAKRSRDARR) is basic motif. The tract at residues 266-273 (LKENQITI) is leucine-zipper.

It belongs to the bZIP family. PAR subfamily. As to quaternary structure, binds DNA as a homodimer or a heterodimer. Exists as a stable dimer in the absence of DNA. Isoform 1 and isoform 3 are expressed in a variety of somatic tissues, including liver, heart, intestine, stomach and kidney. Both isoforms are also expressed in hepatoma (LMH) cells and in embryonic fibroblast cell lines. Isoform 2 and isoform 4 are expressed in adult heart and intestine.

The protein localises to the nucleus. Transcription factor that binds to and transactivates the vitellogenin II (VTG2) promoter. Binds to the palindromic sequence 5'-GTTTACATAAAC-3'. The polypeptide is Transcription factor VBP (TEF) (Gallus gallus (Chicken)).